A 135-amino-acid chain; its full sequence is Photosystem II extrinsic protein V (135 aa).

The heme c site is built by Cys37, Cys40, His41, and His92.

The protein belongs to the cytochrome c family. PsbV subfamily. In terms of assembly, PSII is composed of 1 copy each of membrane proteins PsbA, PsbB, PsbC, PsbD, PsbE, PsbF, PsbH, PsbI, PsbJ, PsbK, PsbL, PsbM, PsbT, PsbX, PsbY, PsbZ, Psb30/Ycf12, peripheral proteins PsbO, CyanoQ (PsbQ), PsbU, PsbV and a large number of cofactors. It forms dimeric complexes. Heme c is required as a cofactor.

The protein localises to the cellular thylakoid membrane. Functionally, one of the extrinsic, lumenal subunits of photosystem II (PSII). PSII is a light-driven water plastoquinone oxidoreductase, using light energy to abstract electrons from H(2)O, generating a proton gradient subsequently used for ATP formation. The extrinsic proteins stabilize the structure of photosystem II oxygen-evolving complex (OEC), the ion environment of oxygen evolution and protect the OEC against heat-induced inactivation. Low-potential cytochrome c that plays a role in the OEC of PSII. This is Photosystem II extrinsic protein V from Microcystis aeruginosa.